A 318-amino-acid polypeptide reads, in one-letter code: Transaldolase (318 aa).

Lysine 132 acts as the Schiff-base intermediate with substrate in catalysis.

Belongs to the transaldolase family. Type 1 subfamily. Homodimer.

The protein resides in the cytoplasm. The enzyme catalyses D-sedoheptulose 7-phosphate + D-glyceraldehyde 3-phosphate = D-erythrose 4-phosphate + beta-D-fructose 6-phosphate. The protein operates within carbohydrate degradation; pentose phosphate pathway; D-glyceraldehyde 3-phosphate and beta-D-fructose 6-phosphate from D-ribose 5-phosphate and D-xylulose 5-phosphate (non-oxidative stage): step 2/3. Functionally, transaldolase is important for the balance of metabolites in the pentose-phosphate pathway. This Shewanella putrefaciens (strain CN-32 / ATCC BAA-453) protein is Transaldolase.